Reading from the N-terminus, the 140-residue chain is Protein NrdI (140 aa).

It belongs to the NrdI family.

In terms of biological role, probably involved in ribonucleotide reductase function. In Photorhabdus laumondii subsp. laumondii (strain DSM 15139 / CIP 105565 / TT01) (Photorhabdus luminescens subsp. laumondii), this protein is Protein NrdI.